The primary structure comprises 296 residues: Ribosomal RNA small subunit methyltransferase H (296 aa).

Residues 38 to 40 (GAH), E57, F88, D103, and H110 contribute to the S-adenosyl-L-methionine site.

The protein belongs to the methyltransferase superfamily. RsmH family.

The protein localises to the cytoplasm. The catalysed reaction is cytidine(1402) in 16S rRNA + S-adenosyl-L-methionine = N(4)-methylcytidine(1402) in 16S rRNA + S-adenosyl-L-homocysteine + H(+). Specifically methylates the N4 position of cytidine in position 1402 (C1402) of 16S rRNA. In Borreliella afzelii (strain PKo) (Borrelia afzelii), this protein is Ribosomal RNA small subunit methyltransferase H.